Here is a 291-residue protein sequence, read N- to C-terminus: Probable alpha-L-glutamate ligase (291 aa).

Residues 104-287 (HQLLASQGID…VAGTIIQHLE (184 aa)) enclose the ATP-grasp domain. Residues Lys-141, 178–179 (EF), Asp-187, and 211–213 (RSN) each bind ATP. Mg(2+) contacts are provided by Asp-248, Glu-260, and Asn-262. Mn(2+)-binding residues include Asp-248, Glu-260, and Asn-262.

The protein belongs to the RimK family. The cofactor is Mg(2+). Mn(2+) serves as cofactor.

This chain is Probable alpha-L-glutamate ligase, found in Xanthomonas campestris pv. campestris (strain B100).